The primary structure comprises 490 residues: Probable cytosol aminopeptidase (490 aa).

Positions 262 and 267 each coordinate Mn(2+). The active site involves K274. D285, D344, and E346 together coordinate Mn(2+). R348 is an active-site residue.

It belongs to the peptidase M17 family. Requires Mn(2+) as cofactor.

It is found in the cytoplasm. It carries out the reaction Release of an N-terminal amino acid, Xaa-|-Yaa-, in which Xaa is preferably Leu, but may be other amino acids including Pro although not Arg or Lys, and Yaa may be Pro. Amino acid amides and methyl esters are also readily hydrolyzed, but rates on arylamides are exceedingly low.. It catalyses the reaction Release of an N-terminal amino acid, preferentially leucine, but not glutamic or aspartic acids.. Presumably involved in the processing and regular turnover of intracellular proteins. Catalyzes the removal of unsubstituted N-terminal amino acids from various peptides. The sequence is that of Probable cytosol aminopeptidase from Xanthomonas oryzae pv. oryzae (strain MAFF 311018).